The primary structure comprises 331 residues: dTDP-glucose 4,6-dehydratase (331 aa).

NAD(+) is bound by residues 11-12 (FI), 33-36 (DALT), 57-58 (DI), 77-81 (FAAES), and Thr96. A substrate-binding site is contributed by Ser81. Thr120 is a binding site for substrate. Asp121 functions as the Proton donor in the catalytic mechanism. Catalysis depends on proton acceptor residues Glu122 and Tyr147. NAD(+) is bound at residue 147–151 (YSATK). Asn176 contacts substrate. Position 177 (Asn177) interacts with NAD(+). Substrate-binding positions include 186–191 (KFIPRQ), 202–204 (KLY), Arg211, Asn246, and 269–273 (DRVGH).

This sequence belongs to the NAD(P)-dependent epimerase/dehydratase family. dTDP-glucose dehydratase subfamily. As to quaternary structure, homodimer. The cofactor is NAD(+).

The enzyme catalyses dTDP-alpha-D-glucose = dTDP-4-dehydro-6-deoxy-alpha-D-glucose + H2O. It functions in the pathway carbohydrate biosynthesis; dTDP-L-rhamnose biosynthesis. Its function is as follows. Catalyzes the dehydration of dTDP-D-glucose to form dTDP-6-deoxy-D-xylo-4-hexulose via a three-step process involving oxidation, dehydration and reduction. Involved in the biosynthesis of the dTDP-L-rhamnose which is a component of the critical linker, D-N-acetylglucosamine-L-rhamnose disaccharide, which connects the galactan region of arabinogalactan to peptidoglycan via a phosphodiester linkage. This is dTDP-glucose 4,6-dehydratase (rmlB) from Mycobacterium tuberculosis (strain CDC 1551 / Oshkosh).